The chain runs to 493 residues: Ribose import ATP-binding protein RbsA (493 aa).

ABC transporter domains lie at 5-241 and 252-491; these read LKIS…VGRR and EKGE…AAAI. 37–44 contributes to the ATP binding site; it reads GENGAGKS.

This sequence belongs to the ABC transporter superfamily. Ribose importer (TC 3.A.1.2.1) family. The complex is composed of an ATP-binding protein (RbsA), two transmembrane proteins (RbsC) and a solute-binding protein (RbsB).

It localises to the cell inner membrane. It carries out the reaction D-ribose(out) + ATP + H2O = D-ribose(in) + ADP + phosphate + H(+). Its function is as follows. Part of the ABC transporter complex RbsABC involved in ribose import. Responsible for energy coupling to the transport system. The sequence is that of Ribose import ATP-binding protein RbsA from Haemophilus influenzae (strain ATCC 51907 / DSM 11121 / KW20 / Rd).